A 358-amino-acid chain; its full sequence is NADH-quinone oxidoreductase subunit H (358 aa).

The next 8 membrane-spanning stretches (helical) occupy residues 30-50, 96-116, 129-149, 165-185, 201-221, 264-284, 297-317, and 336-356; these read IVIG…MIFM, FLYN…FSCL, VGIF…LLAG, GAQM…IVIL, GWFL…YLIA, LFII…PLHI, IPGF…LMWI, and YLVP…VFKL.

It belongs to the complex I subunit 1 family. As to quaternary structure, NDH-1 is composed of 14 different subunits. Subunits NuoA, H, J, K, L, M, N constitute the membrane sector of the complex.

It is found in the cell inner membrane. The enzyme catalyses a quinone + NADH + 5 H(+)(in) = a quinol + NAD(+) + 4 H(+)(out). NDH-1 shuttles electrons from NADH, via FMN and iron-sulfur (Fe-S) centers, to quinones in the respiratory chain. The immediate electron acceptor for the enzyme in this species is believed to be ubiquinone. Couples the redox reaction to proton translocation (for every two electrons transferred, four hydrogen ions are translocated across the cytoplasmic membrane), and thus conserves the redox energy in a proton gradient. This subunit may bind ubiquinone. This is NADH-quinone oxidoreductase subunit H from Phocaeicola vulgatus (strain ATCC 8482 / DSM 1447 / JCM 5826 / CCUG 4940 / NBRC 14291 / NCTC 11154) (Bacteroides vulgatus).